The chain runs to 179 residues: ATP synthase subunit delta (179 aa).

This sequence belongs to the ATPase delta chain family. In terms of assembly, F-type ATPases have 2 components, F(1) - the catalytic core - and F(0) - the membrane proton channel. F(1) has five subunits: alpha(3), beta(3), gamma(1), delta(1), epsilon(1). F(0) has three main subunits: a(1), b(2) and c(10-14). The alpha and beta chains form an alternating ring which encloses part of the gamma chain. F(1) is attached to F(0) by a central stalk formed by the gamma and epsilon chains, while a peripheral stalk is formed by the delta and b chains.

It localises to the cell inner membrane. F(1)F(0) ATP synthase produces ATP from ADP in the presence of a proton or sodium gradient. F-type ATPases consist of two structural domains, F(1) containing the extramembraneous catalytic core and F(0) containing the membrane proton channel, linked together by a central stalk and a peripheral stalk. During catalysis, ATP synthesis in the catalytic domain of F(1) is coupled via a rotary mechanism of the central stalk subunits to proton translocation. In terms of biological role, this protein is part of the stalk that links CF(0) to CF(1). It either transmits conformational changes from CF(0) to CF(1) or is implicated in proton conduction. In Burkholderia mallei (strain SAVP1), this protein is ATP synthase subunit delta.